The chain runs to 59 residues: Large ribosomal subunit protein bL33 (59 aa).

It belongs to the bacterial ribosomal protein bL33 family.

This is Large ribosomal subunit protein bL33 from Neorickettsia sennetsu (strain ATCC VR-367 / Miyayama) (Ehrlichia sennetsu).